Reading from the N-terminus, the 66-residue chain is ATP synthase F(0) complex subunit 8 (66 aa).

A helical transmembrane segment spans residues 8–24 (TWLTMILSMFLTLFIIF). N6-acetyllysine; alternate is present on lysine 54. At lysine 54 the chain carries N6-succinyllysine; alternate. N6-acetyllysine is present on lysine 57.

This sequence belongs to the ATPase protein 8 family. Component of the ATP synthase complex composed at least of ATP5F1A/subunit alpha, ATP5F1B/subunit beta, ATP5MC1/subunit c (homooctomer), MT-ATP6/subunit a, MT-ATP8/subunit 8, ATP5ME/subunit e, ATP5MF/subunit f, ATP5MG/subunit g, ATP5MK/subunit k, ATP5MJ/subunit j, ATP5F1C/subunit gamma, ATP5F1D/subunit delta, ATP5F1E/subunit epsilon, ATP5PF/subunit F6, ATP5PB/subunit b, ATP5PD/subunit d, ATP5PO/subunit OSCP. ATP synthase complex consists of a soluble F(1) head domain (subunits alpha(3) and beta(3)) - the catalytic core - and a membrane F(0) domain - the membrane proton channel (subunits c, a, 8, e, f, g, k and j). These two domains are linked by a central stalk (subunits gamma, delta, and epsilon) rotating inside the F1 region and a stationary peripheral stalk (subunits F6, b, d, and OSCP). Interacts with PRICKLE3.

The protein localises to the mitochondrion membrane. In terms of biological role, subunit 8, of the mitochondrial membrane ATP synthase complex (F(1)F(0) ATP synthase or Complex V) that produces ATP from ADP in the presence of a proton gradient across the membrane which is generated by electron transport complexes of the respiratory chain. ATP synthase complex consist of a soluble F(1) head domain - the catalytic core - and a membrane F(1) domain - the membrane proton channel. These two domains are linked by a central stalk rotating inside the F(1) region and a stationary peripheral stalk. During catalysis, ATP synthesis in the catalytic domain of F(1) is coupled via a rotary mechanism of the central stalk subunits to proton translocation. In vivo, can only synthesize ATP although its ATP hydrolase activity can be activated artificially in vitro. Part of the complex F(0) domain. The protein is ATP synthase F(0) complex subunit 8 of Bos mutus grunniens (Wild yak).